A 388-amino-acid polypeptide reads, in one-letter code: Succinate--CoA ligase [ADP-forming] subunit beta (388 aa).

Residues 9 to 245 (KELLAKYGLP…KSQENERELK (237 aa)) form the ATP-grasp domain. ATP-binding positions include Lys46, 53 to 55 (GRG), Glu100, Tyr103, and Glu108. Mg(2+) is bound by residues Asn200 and Asp214. Substrate contacts are provided by residues Asn265 and 322–324 (GIV).

It belongs to the succinate/malate CoA ligase beta subunit family. Heterotetramer of two alpha and two beta subunits. It depends on Mg(2+) as a cofactor.

It carries out the reaction succinate + ATP + CoA = succinyl-CoA + ADP + phosphate. It catalyses the reaction GTP + succinate + CoA = succinyl-CoA + GDP + phosphate. The protein operates within carbohydrate metabolism; tricarboxylic acid cycle; succinate from succinyl-CoA (ligase route): step 1/1. Its function is as follows. Succinyl-CoA synthetase functions in the citric acid cycle (TCA), coupling the hydrolysis of succinyl-CoA to the synthesis of either ATP or GTP and thus represents the only step of substrate-level phosphorylation in the TCA. The beta subunit provides nucleotide specificity of the enzyme and binds the substrate succinate, while the binding sites for coenzyme A and phosphate are found in the alpha subunit. This Laribacter hongkongensis (strain HLHK9) protein is Succinate--CoA ligase [ADP-forming] subunit beta.